A 239-amino-acid polypeptide reads, in one-letter code: tRNA (guanine-N(7)-)-methyltransferase (239 aa).

S-adenosyl-L-methionine is bound by residues Glu-69, Glu-94, Asp-121, and Asp-144. Asp-144 is a catalytic residue. Substrate is bound by residues Lys-148, Asp-180, and Thr-217–Glu-220.

The protein belongs to the class I-like SAM-binding methyltransferase superfamily. TrmB family.

It carries out the reaction guanosine(46) in tRNA + S-adenosyl-L-methionine = N(7)-methylguanosine(46) in tRNA + S-adenosyl-L-homocysteine. Its pathway is tRNA modification; N(7)-methylguanine-tRNA biosynthesis. Its function is as follows. Catalyzes the formation of N(7)-methylguanine at position 46 (m7G46) in tRNA. This is tRNA (guanine-N(7)-)-methyltransferase from Pseudoalteromonas atlantica (strain T6c / ATCC BAA-1087).